The following is a 352-amino-acid chain: Phosphoribosylformylglycinamidine cyclo-ligase (352 aa).

It belongs to the AIR synthase family.

It localises to the cytoplasm. It carries out the reaction 2-formamido-N(1)-(5-O-phospho-beta-D-ribosyl)acetamidine + ATP = 5-amino-1-(5-phospho-beta-D-ribosyl)imidazole + ADP + phosphate + H(+). It participates in purine metabolism; IMP biosynthesis via de novo pathway; 5-amino-1-(5-phospho-D-ribosyl)imidazole from N(2)-formyl-N(1)-(5-phospho-D-ribosyl)glycinamide: step 2/2. The chain is Phosphoribosylformylglycinamidine cyclo-ligase from Stenotrophomonas maltophilia (strain R551-3).